Reading from the N-terminus, the 88-residue chain is DNA-directed RNA polymerase subunit omega (88 aa).

It belongs to the RNA polymerase subunit omega family. As to quaternary structure, the RNAP catalytic core consists of 2 alpha, 1 beta, 1 beta' and 1 omega subunit. When a sigma factor is associated with the core the holoenzyme is formed, which can initiate transcription.

The enzyme catalyses RNA(n) + a ribonucleoside 5'-triphosphate = RNA(n+1) + diphosphate. Functionally, promotes RNA polymerase assembly. Latches the N- and C-terminal regions of the beta' subunit thereby facilitating its interaction with the beta and alpha subunits. This is DNA-directed RNA polymerase subunit omega from Actinobacillus succinogenes (strain ATCC 55618 / DSM 22257 / CCUG 43843 / 130Z).